We begin with the raw amino-acid sequence, 362 residues long: Probable dual-specificity RNA methyltransferase RlmN (362 aa).

Glutamate 99 functions as the Proton acceptor in the catalytic mechanism. In terms of domain architecture, Radical SAM core spans 105–341; sequence SPDRHTVCVS…VTVRKSQGAS (237 aa). The cysteines at positions 112 and 346 are disulfide-linked. The [4Fe-4S] cluster site is built by cysteine 119, cysteine 123, and cysteine 126. S-adenosyl-L-methionine is bound by residues 171 to 172, serine 204, 227 to 229, and asparagine 303; these read GE and SLH. Cysteine 346 (S-methylcysteine intermediate) is an active-site residue.

This sequence belongs to the radical SAM superfamily. RlmN family. [4Fe-4S] cluster is required as a cofactor.

It localises to the cytoplasm. It carries out the reaction adenosine(2503) in 23S rRNA + 2 reduced [2Fe-2S]-[ferredoxin] + 2 S-adenosyl-L-methionine = 2-methyladenosine(2503) in 23S rRNA + 5'-deoxyadenosine + L-methionine + 2 oxidized [2Fe-2S]-[ferredoxin] + S-adenosyl-L-homocysteine. The catalysed reaction is adenosine(37) in tRNA + 2 reduced [2Fe-2S]-[ferredoxin] + 2 S-adenosyl-L-methionine = 2-methyladenosine(37) in tRNA + 5'-deoxyadenosine + L-methionine + 2 oxidized [2Fe-2S]-[ferredoxin] + S-adenosyl-L-homocysteine. In terms of biological role, specifically methylates position 2 of adenine 2503 in 23S rRNA and position 2 of adenine 37 in tRNAs. The sequence is that of Probable dual-specificity RNA methyltransferase RlmN from Chlorobium phaeobacteroides (strain BS1).